Reading from the N-terminus, the 119-residue chain is Large ribosomal subunit protein bL20 (119 aa).

This sequence belongs to the bacterial ribosomal protein bL20 family.

Its function is as follows. Binds directly to 23S ribosomal RNA and is necessary for the in vitro assembly process of the 50S ribosomal subunit. It is not involved in the protein synthesizing functions of that subunit. In Lactococcus lactis subsp. cremoris (strain MG1363), this protein is Large ribosomal subunit protein bL20.